We begin with the raw amino-acid sequence, 462 residues long: Argininosuccinate lyase (462 aa).

It belongs to the lyase 1 family. Argininosuccinate lyase subfamily.

Its subcellular location is the cytoplasm. The enzyme catalyses 2-(N(omega)-L-arginino)succinate = fumarate + L-arginine. It functions in the pathway amino-acid biosynthesis; L-arginine biosynthesis; L-arginine from L-ornithine and carbamoyl phosphate: step 3/3. The chain is Argininosuccinate lyase from Bacillus anthracis (strain A0248).